We begin with the raw amino-acid sequence, 434 residues long: Protein HEAT INTOLERANT 4 (434 aa).

The short motif at 1–8 (MKKGAKRK) is the Nuclear localization signal 1 element. Residues 1–15 (MKKGAKRKGVSKAGR) show a composition bias toward basic residues. Positions 1-131 (MKKGAKRKGV…PVPKAKKPRA (131 aa)) are disordered. Basic and acidic residues predominate over residues 30 to 53 (ETTKTTQEESQQHEEEVVDEVKEN). Residues 54 to 82 (GEEEEAKGDQEEEEDAKPDSLEEDEENQE) are compositionally biased toward acidic residues. Residues 83-98 (DEVKAEEVKEEVEKKP) show a composition bias toward basic and acidic residues. The Nuclear localization signal 2 signature appears at 95 to 102 (EKKPVARR). Positions 99-110 (VARRGGKRKRAT) are enriched in basic residues. Residues 111–122 (KKDTEIKDEKKP) show a composition bias toward basic and acidic residues. Residues 363-394 (VKEQVRAAKKANREAKDARKKAIEEMSEDTKQ) adopt a coiled-coil conformation. The Nuclear localization signal 3 signature appears at 370–377 (AKKANREA).

Its subcellular location is the nucleus. It is found in the nucleolus. In terms of biological role, essential protein required for basal thermotolerance, especially during heat-induced chromocentre decondensation, thus regulating transcriptional gene silencing (TGS). This Arabidopsis thaliana (Mouse-ear cress) protein is Protein HEAT INTOLERANT 4.